A 565-amino-acid chain; its full sequence is Calcium-dependent protein kinase 21 (565 aa).

Residue Gly-2 is the site of N-myristoyl glycine attachment. The segment at 28–55 is disordered; it reads PVPDAEAASPRKDGVDGDGDDVRGGGGG. A compositionally biased stretch (basic and acidic residues) spans 36–50; it reads SPRKDGVDGDGDDVR. Residues 77 to 358 enclose the Protein kinase domain; sequence YVLGKELGRG…AKQVLEHPWL (282 aa). ATP is bound by residues 83–91 and Lys-106; that span reads LGRGEFGVT. The active-site Proton acceptor is the Asp-224. Positions 364 to 394 are autoinhibitory domain; sequence APNVSLGDAVRARLQQFSAMNKFKKKALGVV. EF-hand domains are found at residues 401 to 436, 437 to 472, 473 to 500, and 504 to 539; these read EEVD…NGQP, VPEP…LKKM, SNDE…ELRE, and PNEQ…GADW. Positions 414, 416, 418, 420, 425, 450, 452, 454, 456, 461, 486, 488, 490, 497, 517, 519, 521, 523, and 528 each coordinate Ca(2+).

This sequence belongs to the protein kinase superfamily. Ser/Thr protein kinase family. CDPK subfamily. Expressed in spikelets and developing seeds.

The protein localises to the membrane. The enzyme catalyses L-seryl-[protein] + ATP = O-phospho-L-seryl-[protein] + ADP + H(+). It catalyses the reaction L-threonyl-[protein] + ATP = O-phospho-L-threonyl-[protein] + ADP + H(+). Activated by calcium. Autophosphorylation may play an important role in the regulation of the kinase activity. May play a role in signal transduction pathways that involve calcium as a second messenger. Functions in signal transduction pathways that positively regulate responses to abscisic acid (ABA) and salt stress. This chain is Calcium-dependent protein kinase 21, found in Oryza sativa subsp. japonica (Rice).